The following is a 272-amino-acid chain: Cyclase-like protein 2 (272 aa).

Residues 1 to 17 form the signal peptide; the sequence is MAHLATVVLLLVAAARQ.

It belongs to the Cyclase 1 superfamily. As to expression, highly expressed in leaf sheaths and flag leaves. Expressed in roots, stems, leaf collars, glumes, young panicles and pistils.

Its subcellular location is the secreted. It is found in the extracellular space. It localises to the extracellular matrix. Its function is as follows. May be involved in response to stresses. This is Cyclase-like protein 2 from Oryza sativa subsp. japonica (Rice).